The chain runs to 84 residues: Large ribosomal subunit protein bL31B (84 aa).

The protein belongs to the bacterial ribosomal protein bL31 family. Type B subfamily. In terms of assembly, part of the 50S ribosomal subunit.

This chain is Large ribosomal subunit protein bL31B, found in Alkalilimnicola ehrlichii (strain ATCC BAA-1101 / DSM 17681 / MLHE-1).